Reading from the N-terminus, the 459-residue chain is Ribulose bisphosphate carboxylase large chain (459 aa).

Lys4 is modified (N6,N6,N6-trimethyllysine). Residues Asn113 and Thr163 each coordinate substrate. Lys165 serves as the catalytic Proton acceptor. Substrate is bound at residue Lys167. Mg(2+)-binding residues include Lys191, Asp193, and Glu194. Residue Lys191 is modified to N6-carboxylysine. His284 acts as the Proton acceptor in catalysis. Residues Arg285, His317, and Ser369 each coordinate substrate.

The protein belongs to the RuBisCO large chain family. Type I subfamily. In terms of assembly, heterohexadecamer of 8 large chains and 8 small chains; disulfide-linked. The disulfide link is formed within the large subunit homodimers. Requires Mg(2+) as cofactor. The disulfide bond which can form in the large chain dimeric partners within the hexadecamer appears to be associated with oxidative stress and protein turnover.

It localises to the plastid. The protein resides in the chloroplast. The enzyme catalyses 2 (2R)-3-phosphoglycerate + 2 H(+) = D-ribulose 1,5-bisphosphate + CO2 + H2O. It carries out the reaction D-ribulose 1,5-bisphosphate + O2 = 2-phosphoglycolate + (2R)-3-phosphoglycerate + 2 H(+). RuBisCO catalyzes two reactions: the carboxylation of D-ribulose 1,5-bisphosphate, the primary event in carbon dioxide fixation, as well as the oxidative fragmentation of the pentose substrate in the photorespiration process. Both reactions occur simultaneously and in competition at the same active site. The chain is Ribulose bisphosphate carboxylase large chain from Roridula gorgonias (South African fly bush).